We begin with the raw amino-acid sequence, 30 residues long: Cyclotide vdif-A (30 aa).

The segment at residues 1 to 30 (GIPCGESCVFIPCISSVVGCSCKSKVCYRN) is a cross-link (cyclopeptide (Gly-Asn)). Cystine bridges form between Cys4–Cys20, Cys8–Cys22, and Cys13–Cys27.

The protein belongs to the cyclotide family. Bracelet subfamily. This is a cyclic peptide.

Its function is as follows. Probably participates in a plant defense mechanism. This chain is Cyclotide vdif-A, found in Viola diffusa.